A 449-amino-acid polypeptide reads, in one-letter code: Exopolygalacturonase X-2 (449 aa).

A signal peptide spans 1–24 (MGFKRTIGLLLGILLALDQVSVLA). Asn136, Asn172, and Asn208 each carry an N-linked (GlcNAc...) asparagine glycan. A PbH1 1 repeat occupies 240-261 (SDNVVIQNSVINHDDDCVSFKP). The active-site Proton donor is Asp254. Cys256 and Cys273 are disulfide-bonded. 2 N-linked (GlcNAc...) asparagine glycosylation sites follow: Asn262 and Asn274. PbH1 repeat units lie at residues 263 to 283 (STNI…SVGS) and 294 to 315 (VSDL…RLKV). Residue His277 is part of the active site. N-linked (GlcNAc...) asparagine glycans are attached at residues Asn301, Asn306, Asn340, and Asn365. An intrachain disulfide couples Cys403 to Cys409. N-linked (GlcNAc...) asparagine glycans are attached at residues Asn416 and Asn421.

The protein belongs to the glycosyl hydrolase 28 family.

The protein localises to the secreted. It carries out the reaction [(1-&gt;4)-alpha-D-galacturonosyl](n) + H2O = alpha-D-galacturonate + [(1-&gt;4)-alpha-D-galacturonosyl](n-1). Specific in hydrolyzing the terminal glycosidic bond of polygalacturonic acid and oligogalacturonates. This chain is Exopolygalacturonase X-2 (pgaX-2), found in Emericella nidulans (strain FGSC A4 / ATCC 38163 / CBS 112.46 / NRRL 194 / M139) (Aspergillus nidulans).